Reading from the N-terminus, the 370-residue chain is Erythronate-4-phosphate dehydrogenase (370 aa).

Ser-45 and Thr-66 together coordinate substrate. NAD(+) contacts are provided by Asp-142 and Thr-169. Residue Arg-202 is part of the active site. Residue Asp-228 coordinates NAD(+). Glu-233 is a catalytic residue. The active-site Proton donor is His-250. Gly-253 serves as a coordination point for NAD(+). Residue Tyr-254 participates in substrate binding.

The protein belongs to the D-isomer specific 2-hydroxyacid dehydrogenase family. PdxB subfamily. As to quaternary structure, homodimer.

Its subcellular location is the cytoplasm. The enzyme catalyses 4-phospho-D-erythronate + NAD(+) = (R)-3-hydroxy-2-oxo-4-phosphooxybutanoate + NADH + H(+). It participates in cofactor biosynthesis; pyridoxine 5'-phosphate biosynthesis; pyridoxine 5'-phosphate from D-erythrose 4-phosphate: step 2/5. Catalyzes the oxidation of erythronate-4-phosphate to 3-hydroxy-2-oxo-4-phosphonooxybutanoate. In Teredinibacter turnerae (strain ATCC 39867 / T7901), this protein is Erythronate-4-phosphate dehydrogenase.